Consider the following 118-residue polypeptide: Ribosomal silencing factor RsfS (118 aa).

Belongs to the Iojap/RsfS family. Interacts with ribosomal protein uL14 (rplN).

The protein localises to the cytoplasm. Functionally, functions as a ribosomal silencing factor. Interacts with ribosomal protein uL14 (rplN), blocking formation of intersubunit bridge B8. Prevents association of the 30S and 50S ribosomal subunits and the formation of functional ribosomes, thus repressing translation. The polypeptide is Ribosomal silencing factor RsfS (Bacillus subtilis (strain 168)).